The primary structure comprises 1085 residues: Tudor domain-containing protein 7B (1085 aa).

One can recognise an HTH OST-type 1 domain in the interval 3–76 (DEELVKKMVR…SGEVMCHATT (74 aa)). Disordered regions lie at residues 112-183 (APLV…PEKR), 200-228 (RNPQ…SAPY), and 297-341 (PAKE…KALS). Positions 203–216 (QHINVPSNLNENTT) are enriched in polar residues. An HTH OST-type 2 domain is found at 229–299 (SPKLVQSRLQ…PQELLLYPAK (71 aa)). The span at 322–335 (TQRPSLTAKSNTPE) shows a compositional bias: polar residues. The 71-residue stretch at 340–410 (LSPDLKQKLG…PKRAILYAKV (71 aa)) folds into the HTH OST-type 3 domain. Tudor domains are found at residues 496–554 (SPSP…FYRL) and 686–743 (RPFC…LLRD). A compositionally biased stretch (polar residues) spans 843-853 (NVPTATQTSSL). The tract at residues 843–888 (NVPTATQTSSLKTDRGDKALHTPKKTSPPLGSKSTPAGSPPERLSL) is disordered.

The protein localises to the cytoplasm. Functionally, component of specific cytoplasmic RNA granules involved in post-transcriptional regulation of specific genes: probably acts by binding to specific mRNAs and regulating their translation. Probably required during spermatogenesis. This chain is Tudor domain-containing protein 7B (tdrd7b), found in Danio rerio (Zebrafish).